The sequence spans 729 residues: Fatty acid oxidation complex subunit alpha (729 aa).

Residues 1–189 (MLYKGDTLYL…KIGLVDGVVK (189 aa)) are enoyl-CoA hydratase/isomerase. Aspartate 296 contributes to the substrate binding site. The segment at 311-729 (ETPKQAAVLG…ARPVGSLKTA (419 aa)) is 3-hydroxyacyl-CoA dehydrogenase. NAD(+) is bound by residues methionine 324, aspartate 343, 400 to 402 (VVE), lysine 407, and serine 429. Catalysis depends on histidine 450, which acts as the For 3-hydroxyacyl-CoA dehydrogenase activity. Asparagine 453 contributes to the NAD(+) binding site. Residues asparagine 500 and tyrosine 660 each coordinate substrate. Residues 708-729 (RHNEPYYPPVEPARPVGSLKTA) are disordered.

It in the N-terminal section; belongs to the enoyl-CoA hydratase/isomerase family. The protein in the C-terminal section; belongs to the 3-hydroxyacyl-CoA dehydrogenase family. Heterotetramer of two alpha chains (FadB) and two beta chains (FadA).

It catalyses the reaction a (3S)-3-hydroxyacyl-CoA + NAD(+) = a 3-oxoacyl-CoA + NADH + H(+). The enzyme catalyses a (3S)-3-hydroxyacyl-CoA = a (2E)-enoyl-CoA + H2O. It carries out the reaction a 4-saturated-(3S)-3-hydroxyacyl-CoA = a (3E)-enoyl-CoA + H2O. The catalysed reaction is (3S)-3-hydroxybutanoyl-CoA = (3R)-3-hydroxybutanoyl-CoA. It catalyses the reaction a (3Z)-enoyl-CoA = a 4-saturated (2E)-enoyl-CoA. The enzyme catalyses a (3E)-enoyl-CoA = a 4-saturated (2E)-enoyl-CoA. It participates in lipid metabolism; fatty acid beta-oxidation. In terms of biological role, involved in the aerobic and anaerobic degradation of long-chain fatty acids via beta-oxidation cycle. Catalyzes the formation of 3-oxoacyl-CoA from enoyl-CoA via L-3-hydroxyacyl-CoA. It can also use D-3-hydroxyacyl-CoA and cis-3-enoyl-CoA as substrate. The chain is Fatty acid oxidation complex subunit alpha from Salmonella gallinarum (strain 287/91 / NCTC 13346).